A 395-amino-acid polypeptide reads, in one-letter code: S-adenosylmethionine synthase (395 aa).

Position 10 (E10) interacts with Mg(2+). H16 serves as a coordination point for ATP. E44 serves as a coordination point for K(+). L-methionine contacts are provided by E57 and Q100. Residues 168–170 (DGK), 236–239 (SGRF), 253–254 (RK), A270, K274, and K278 each bind ATP. K278 serves as a coordination point for L-methionine.

It belongs to the AdoMet synthase family. Homotetramer. It depends on Mn(2+) as a cofactor. Mg(2+) serves as cofactor. Requires Co(2+) as cofactor. K(+) is required as a cofactor.

It localises to the cytoplasm. It catalyses the reaction L-methionine + ATP + H2O = S-adenosyl-L-methionine + phosphate + diphosphate. It functions in the pathway amino-acid biosynthesis; S-adenosyl-L-methionine biosynthesis; S-adenosyl-L-methionine from L-methionine: step 1/1. Catalyzes the formation of S-adenosylmethionine from methionine and ATP. The reaction comprises two steps that are both catalyzed by the same enzyme: formation of S-adenosylmethionine (AdoMet) and triphosphate, and subsequent hydrolysis of the triphosphate. The polypeptide is S-adenosylmethionine synthase (METK) (Populus deltoides (Eastern poplar)).